Here is a 263-residue protein sequence, read N- to C-terminus: Urease accessory protein UreD 1 (263 aa).

This sequence belongs to the UreD family. In terms of assembly, ureD, UreF and UreG form a complex that acts as a GTP-hydrolysis-dependent molecular chaperone, activating the urease apoprotein by helping to assemble the nickel containing metallocenter of UreC. The UreE protein probably delivers the nickel.

The protein localises to the cytoplasm. Required for maturation of urease via the functional incorporation of the urease nickel metallocenter. This is Urease accessory protein UreD 1 from Synechococcus sp. (strain JA-3-3Ab) (Cyanobacteria bacterium Yellowstone A-Prime).